The following is a 462-amino-acid chain: L-seryl-tRNA(Sec) selenium transferase (462 aa).

K292 is subject to N6-(pyridoxal phosphate)lysine.

The protein belongs to the SelA family. It depends on pyridoxal 5'-phosphate as a cofactor.

It is found in the cytoplasm. The enzyme catalyses L-seryl-tRNA(Sec) + selenophosphate + H(+) = L-selenocysteinyl-tRNA(Sec) + phosphate. It participates in aminoacyl-tRNA biosynthesis; selenocysteinyl-tRNA(Sec) biosynthesis; selenocysteinyl-tRNA(Sec) from L-seryl-tRNA(Sec) (bacterial route): step 1/1. In terms of biological role, converts seryl-tRNA(Sec) to selenocysteinyl-tRNA(Sec) required for selenoprotein biosynthesis. This Clostridium perfringens (strain ATCC 13124 / DSM 756 / JCM 1290 / NCIMB 6125 / NCTC 8237 / Type A) protein is L-seryl-tRNA(Sec) selenium transferase.